We begin with the raw amino-acid sequence, 385 residues long: S-adenosylmethionine synthase (385 aa).

H15 contacts ATP. A Mg(2+)-binding site is contributed by D17. Residue E43 participates in K(+) binding. Positions 56 and 99 each coordinate L-methionine. The segment at 99 to 109 (QSPDINQGVDR) is flexible loop. Residues 164–166 (DAK), 230–231 (RF), D239, 245–246 (RK), A262, and K266 each bind ATP. D239 is an L-methionine binding site. An L-methionine-binding site is contributed by K270.

It belongs to the AdoMet synthase family. In terms of assembly, homotetramer; dimer of dimers. The cofactor is Mg(2+). Requires K(+) as cofactor.

The protein localises to the cytoplasm. It carries out the reaction L-methionine + ATP + H2O = S-adenosyl-L-methionine + phosphate + diphosphate. It functions in the pathway amino-acid biosynthesis; S-adenosyl-L-methionine biosynthesis; S-adenosyl-L-methionine from L-methionine: step 1/1. Catalyzes the formation of S-adenosylmethionine (AdoMet) from methionine and ATP. The overall synthetic reaction is composed of two sequential steps, AdoMet formation and the subsequent tripolyphosphate hydrolysis which occurs prior to release of AdoMet from the enzyme. The sequence is that of S-adenosylmethionine synthase from Hamiltonella defensa subsp. Acyrthosiphon pisum (strain 5AT).